Here is a 307-residue protein sequence, read N- to C-terminus: Ribosomal RNA small subunit methyltransferase H (307 aa).

S-adenosyl-L-methionine-binding positions include 33 to 35 (GGY), D51, F82, D96, and Q103.

It belongs to the methyltransferase superfamily. RsmH family.

The protein localises to the cytoplasm. It carries out the reaction cytidine(1402) in 16S rRNA + S-adenosyl-L-methionine = N(4)-methylcytidine(1402) in 16S rRNA + S-adenosyl-L-homocysteine + H(+). Its function is as follows. Specifically methylates the N4 position of cytidine in position 1402 (C1402) of 16S rRNA. In Rickettsia rickettsii (strain Iowa), this protein is Ribosomal RNA small subunit methyltransferase H.